A 483-amino-acid polypeptide reads, in one-letter code: Isocitrate dehydrogenase [NADP] (483 aa).

Thr74 contributes to the NADP(+) binding site. Residues Ser83, Asn85, Arg89, Arg99, and Arg121 each contribute to the D-threo-isocitrate site. Asp232 contributes to the Mg(2+) binding site. Residues 264 to 270 (HGSAPDI) and Asn277 contribute to the NADP(+) site.

It belongs to the isocitrate and isopropylmalate dehydrogenases family. Homodimer. Requires Mg(2+) as cofactor. The cofactor is Mn(2+).

It catalyses the reaction D-threo-isocitrate + NADP(+) = 2-oxoglutarate + CO2 + NADPH. In terms of biological role, catalyzes the oxidative decarboxylation of isocitrate to 2-oxoglutarate and carbon dioxide with the concomitant reduction of NADP(+). The polypeptide is Isocitrate dehydrogenase [NADP] (icd) (Rickettsia felis (strain ATCC VR-1525 / URRWXCal2) (Rickettsia azadi)).